Here is a 265-residue protein sequence, read N- to C-terminus: HTH-type transcriptional activator CfaD (265 aa).

An HTH araC/xylS-type domain is found at 164–261 (DKVRNVIEKD…GVTPKQFFTY (98 aa)). 2 DNA-binding regions (H-T-H motif) span residues 181 to 202 (GIIA…ESEN) and 228 to 251 (ISQI…NKHY).

Homodimer.

Its function is as follows. Transcriptional activator of the CFA/I adhesin (cfaA and cfaB) genes of enterotoxigenic E.coli at 37 degrees Celsius. Also represses the silencing effect of H-NS (hns). The chain is HTH-type transcriptional activator CfaD from Escherichia coli.